A 1913-amino-acid chain; its full sequence is Protein TIC 214 (1913 aa).

5 helical membrane-spanning segments follow: residues 18 to 38, 64 to 84, 124 to 144, 172 to 192, and 214 to 234; these read IINS…FSIG, FITG…HLAL, LSIQ…HLML, VGWL…VSWI, and LKSA…VNYL. Disordered stretches follow at residues 245 to 330, 707 to 734, and 1605 to 1652; these read KLNE…ETEE, YTDK…NSDT, and EKED…RKKK. The segment covering 260–289 has biased composition (basic and acidic residues); sequence KESQKSKESEEERDVEKETTSETKETKQEQ. The segment covering 303–314 has biased composition (acidic residues); the sequence is EKEDPDKIDETE. Residues 315–330 show a composition bias toward basic and acidic residues; sequence EIRVNGKEKKKDETEE. The span at 718–729 shows a compositional bias: low complexity; that stretch reads PNPNTDNTTTEN.

It belongs to the TIC214 family. Part of the Tic complex.

It is found in the plastid. The protein localises to the chloroplast inner membrane. In terms of biological role, involved in protein precursor import into chloroplasts. May be part of an intermediate translocation complex acting as a protein-conducting channel at the inner envelope. In Acorus calamus var. americanus (American sweet flag), this protein is Protein TIC 214.